Consider the following 962-residue polypeptide: Protease 3 (962 aa).

The signal sequence occupies residues 1–23; sequence MPRSTWFKALLLLVALWGPAVQA. His-88 is a binding site for Zn(2+). Glu-91 (proton acceptor) is an active-site residue. Residues His-92 and Glu-169 each coordinate Zn(2+).

This sequence belongs to the peptidase M16 family. As to quaternary structure, monomer. Zn(2+) is required as a cofactor.

It localises to the periplasm. It carries out the reaction Preferential cleavage of 16-Tyr-|-Leu-17 and 25-Phe-|-Tyr-26 bonds of oxidized insulin B chain. Also acts on other substrates of Mw less than 7 kDa such as insulin and glucagon.. In terms of biological role, endopeptidase that degrades small peptides of less than 7 kDa, such as glucagon and insulin. The protein is Protease 3 (ptrA) of Salmonella typhi.